The following is a 173-amino-acid chain: Photosystem I assembly protein Ycf3 (173 aa).

3 TPR repeats span residues 35 to 68 (AFVY…EEDT), 72 to 105 (GYIL…NPRL), and 120 to 153 (GEKA…APNN).

Belongs to the Ycf3 family.

The protein resides in the cellular thylakoid membrane. Its function is as follows. Essential for the assembly of the photosystem I (PSI) complex. May act as a chaperone-like factor to guide the assembly of the PSI subunits. The protein is Photosystem I assembly protein Ycf3 of Trichormus variabilis (strain ATCC 29413 / PCC 7937) (Anabaena variabilis).